The following is a 426-amino-acid chain: Enolase (426 aa).

Glutamine 165 provides a ligand contact to (2R)-2-phosphoglycerate. The Proton donor role is filled by glutamate 209. Mg(2+) contacts are provided by aspartate 244, glutamate 287, and aspartate 313. Lysine 338, arginine 367, serine 368, and lysine 389 together coordinate (2R)-2-phosphoglycerate. Lysine 338 (proton acceptor) is an active-site residue.

Belongs to the enolase family. Mg(2+) is required as a cofactor.

Its subcellular location is the cytoplasm. It is found in the secreted. The protein resides in the cell surface. It carries out the reaction (2R)-2-phosphoglycerate = phosphoenolpyruvate + H2O. It participates in carbohydrate degradation; glycolysis; pyruvate from D-glyceraldehyde 3-phosphate: step 4/5. Catalyzes the reversible conversion of 2-phosphoglycerate (2-PG) into phosphoenolpyruvate (PEP). It is essential for the degradation of carbohydrates via glycolysis. The chain is Enolase from Methanococcus maripaludis (strain C5 / ATCC BAA-1333).